Consider the following 105-residue polypeptide: Acylphosphatase (105 aa).

The region spanning 16–105 (RLTAWVRGRV…RGGYSGFTQA (90 aa)) is the Acylphosphatase-like domain. Catalysis depends on residues Arg-31 and Asn-49.

The protein belongs to the acylphosphatase family.

The catalysed reaction is an acyl phosphate + H2O = a carboxylate + phosphate + H(+). The sequence is that of Acylphosphatase (acyP) from Acidothermus cellulolyticus (strain ATCC 43068 / DSM 8971 / 11B).